Here is a 430-residue protein sequence, read N- to C-terminus: Multisubstrate adapter protein soc-1 (430 aa).

Residues 7–133 (NIILEGSLKR…WVNEICKLCK (127 aa)) form the PH domain. The span at 192-222 (SHNSLPSNPNYNNLPDPLESSRSETSSMYSS) shows a compositional bias: low complexity. 3 disordered regions span residues 192 to 246 (SHNS…TRHT), 275 to 303 (EDAE…SEGF), and 315 to 377 (RRAP…RNLD). Residues 341–369 (RNLSRNGVNENGNYSATFSSRTSNYQQSE) are compositionally biased toward polar residues.

Interacts (via C-terminus) with sem-5 (probably via SH3 domain 2). Interacts with nicotinic acetylcholine receptor. May be phosphorylated.

In terms of biological role, adapter protein which modulates signaling mediated by several receptor tyrosine kinases. Plays a role in fluid homeostasis, probably downstream of receptor egl-15 and upstream of let-60/Ras. Involved in nicotinic acetylcholine receptor (nAChR)-mediated sensitivity to nicotine and levamisole and gamma-aminobutyric acid (GABA)receptor-mediated sensitivity to muscimol. Regulates synaptic levels of nAchR receptor subunit lev-1 and unc-38, and GABA receptor subunit unc-49 in the nerve cord, probably downstream of egl-15. Regulates motility. During the formation of neuromuscular junctions at the larval stage, down-regulates membrane protrusion from body wall muscles, probably downstream of egl-15. Promotes vulva induction and down-regulates fertility, probably downstream of receptor let-23. Down-regulates daf-2-mediated repression of dauer formation and positively regulates daf-2-mediated aging. May be involved in the recruitment of phosphatase ptp-2 to egl-15. This Caenorhabditis elegans protein is Multisubstrate adapter protein soc-1.